We begin with the raw amino-acid sequence, 459 residues long: Cysteine--tRNA ligase (459 aa).

A Zn(2+)-binding site is contributed by C28. The 'HIGH' region motif lies at 30–40 (VTIYDLCHIGH). Residues C209, H234, and E238 each coordinate Zn(2+). The 'KMSKS' region motif lies at 266–270 (KMSKS). Residue K269 coordinates ATP.

The protein belongs to the class-I aminoacyl-tRNA synthetase family. In terms of assembly, monomer. It depends on Zn(2+) as a cofactor.

The protein localises to the cytoplasm. It catalyses the reaction tRNA(Cys) + L-cysteine + ATP = L-cysteinyl-tRNA(Cys) + AMP + diphosphate. This is Cysteine--tRNA ligase from Shewanella baltica (strain OS185).